A 664-amino-acid chain; its full sequence is DNA mismatch repair protein MutL (664 aa).

Positions arginine 382–glutamine 447 are disordered. The segment covering arginine 427–glutamate 436 has biased composition (polar residues).

This sequence belongs to the DNA mismatch repair MutL/HexB family.

Its function is as follows. This protein is involved in the repair of mismatches in DNA. It is required for dam-dependent methyl-directed DNA mismatch repair. May act as a 'molecular matchmaker', a protein that promotes the formation of a stable complex between two or more DNA-binding proteins in an ATP-dependent manner without itself being part of a final effector complex. This is DNA mismatch repair protein MutL from Vibrio vulnificus (strain CMCP6).